A 429-amino-acid polypeptide reads, in one-letter code: MKVLVIGNGGREHALAWKAAQSPLVDTVFVAPGNAGTALEPALQNVAIGVTDIPALLSFAQHEKIDLTIVGPEAPLVIGVVDAFRAAGLKIFGPTEGAAQLEGSKAFTKDFLARHQIPTAEYQNFTEIEPALAYLREKGAPIVIKADGLAAGKGVIVAMTLEEAEAAVHDMLAGNAFGDAGHRIVIEEFLDGEEASFIVMVDGEHVLPMATSQDHKRVGNGDTGPNTGGMGAYSPAPVVTDEVHQRTMERIIWPTVKGMAAEGNTYTGFLYAGLMIDKQGNPKVIEFNCRFGDPETQPIMLRMKSDLVDLCLAACDGKLDEKTSEWDERASLGVVIAAGGYPGSYSTGDEIHGLPLEEVADGKVFHAGTKLADDDRVLTSGGRVLCATALGHTVAEAQKRAYALMTDIRWDGSFSRNDIGWRAIEREQN.

One can recognise an ATP-grasp domain in the interval 109-316 (KDFLARHQIP…LVDLCLAACD (208 aa)). 135–196 (LREKGAPIVI…EEFLDGEEAS (62 aa)) lines the ATP pocket. Mg(2+) is bound by residues glutamate 286 and asparagine 288.

This sequence belongs to the GARS family. Monomer. Requires Mg(2+) as cofactor. Mn(2+) is required as a cofactor.

It catalyses the reaction 5-phospho-beta-D-ribosylamine + glycine + ATP = N(1)-(5-phospho-beta-D-ribosyl)glycinamide + ADP + phosphate + H(+). Its pathway is purine metabolism; IMP biosynthesis via de novo pathway; N(1)-(5-phospho-D-ribosyl)glycinamide from 5-phospho-alpha-D-ribose 1-diphosphate: step 2/2. The polypeptide is Phosphoribosylamine--glycine ligase (Salmonella typhimurium (strain LT2 / SGSC1412 / ATCC 700720)).